A 231-amino-acid chain; its full sequence is NADH-ubiquinone oxidoreductase chain 4 (231 aa).

The next 6 membrane-spanning stretches (helical) occupy residues 1–21 (PIAG…YGMI), 34–54 (MFMP…LTCL), 63–85 (IAYS…TPWG), 89–111 (AMAL…NTTY), 128–148 (ILPM…AIPP), and 156–176 (FLIM…LGLS).

Belongs to the complex I subunit 4 family.

The protein resides in the mitochondrion membrane. It catalyses the reaction a ubiquinone + NADH + 5 H(+)(in) = a ubiquinol + NAD(+) + 4 H(+)(out). Functionally, core subunit of the mitochondrial membrane respiratory chain NADH dehydrogenase (Complex I) that is believed to belong to the minimal assembly required for catalysis. Complex I functions in the transfer of electrons from NADH to the respiratory chain. The immediate electron acceptor for the enzyme is believed to be ubiquinone. In Bothriechis schlegelii (Eyelash palm pitviper), this protein is NADH-ubiquinone oxidoreductase chain 4 (MT-ND4).